We begin with the raw amino-acid sequence, 70 residues long: ATP synthase subunit c (70 aa).

The next 2 membrane-spanning stretches (helical) occupy residues 4-24 (IAAAIAIGLSALGAGIGNGLI) and 45-65 (IMFIGVGLVEALPIIGVVIAF).

This sequence belongs to the ATPase C chain family. As to quaternary structure, F-type ATPases have 2 components, F(1) - the catalytic core - and F(0) - the membrane proton channel. F(1) has five subunits: alpha(3), beta(3), gamma(1), delta(1), epsilon(1). F(0) has three main subunits: a(1), b(2) and c(10-14). The alpha and beta chains form an alternating ring which encloses part of the gamma chain. F(1) is attached to F(0) by a central stalk formed by the gamma and epsilon chains, while a peripheral stalk is formed by the delta and b chains.

The protein localises to the cell membrane. In terms of biological role, f(1)F(0) ATP synthase produces ATP from ADP in the presence of a proton or sodium gradient. F-type ATPases consist of two structural domains, F(1) containing the extramembraneous catalytic core and F(0) containing the membrane proton channel, linked together by a central stalk and a peripheral stalk. During catalysis, ATP synthesis in the catalytic domain of F(1) is coupled via a rotary mechanism of the central stalk subunits to proton translocation. Its function is as follows. Key component of the F(0) channel; it plays a direct role in translocation across the membrane. A homomeric c-ring of between 10-14 subunits forms the central stalk rotor element with the F(1) delta and epsilon subunits. This is ATP synthase subunit c from Staphylococcus aureus (strain Mu3 / ATCC 700698).